Reading from the N-terminus, the 1671-residue chain is Kinesin-like protein unc-104 (1671 aa).

One can recognise a Kinesin motor domain in the interval 3-351 (SVKVAVRVRP…LRYADRAKQI (349 aa)). 97-104 (GQTGAGKS) lines the ATP pocket. Residues 358–437 (NEDANAKLIR…IAELNETWEE (80 aa)) are a coiled coil. Residues 391 to 413 (DELNKSTTGIKSPSKSRNRNGST) form a disordered region. A compositionally biased stretch (polar residues) spans 395 to 413 (KSTTGIKSPSKSRNRNGST). In terms of domain architecture, FHA spans 500–566 (TRLGTHEANV…LKTGSRVILG (67 aa)). Residues 577-674 (EQARELREKI…EEQSMTMSMY (98 aa)) are a coiled coil. The tract at residues 949–973 (DVDSGRGIDSNSASDCPENAEEPGE) is disordered. In terms of domain architecture, PH spans 1538–1636 (VVARKGLLNV…WLYAINPLLA (99 aa)).

It belongs to the TRAFAC class myosin-kinesin ATPase superfamily. Kinesin family. Unc-104 subfamily. In terms of assembly, monomer.

The protein resides in the cytoplasm. The protein localises to the cytoskeleton. Its function is as follows. Required for presynaptic maturation, has a role in axonal transport of dense-core vesicles carrying synaptic vesicle precursors, components required for the morphological transformation of axonal growth cones to mature boutons. The sequence is that of Kinesin-like protein unc-104 from Drosophila pseudoobscura pseudoobscura (Fruit fly).